Reading from the N-terminus, the 522-residue chain is Peptide methionine sulfoxide reductase MsrA/MsrB (522 aa).

Residues 17 to 174 (LALGACSPKI…ALALIRNPNA (158 aa)) form the Thioredoxin domain. Residues Cys-68 and Cys-71 are joined by a disulfide bond. A peptide methionine sulfoxide reductase A region spans residues 199-354 (RTIYLAGGCF…PNGYCHIDIR (156 aa)). Cys-207 is a catalytic residue. In terms of domain architecture, MsrB spans 383 to 506 (DAELKRTLTE…NGASLKFIPL (124 aa)). A disulfide bridge connects residues Cys-440 and Cys-495. Cys-495 serves as the catalytic Nucleophile.

In the N-terminal section; belongs to the thioredoxin family. It in the central section; belongs to the MsrA Met sulfoxide reductase family. This sequence in the C-terminal section; belongs to the MsrB Met sulfoxide reductase family.

The enzyme catalyses L-methionyl-[protein] + [thioredoxin]-disulfide + H2O = L-methionyl-(S)-S-oxide-[protein] + [thioredoxin]-dithiol. It catalyses the reaction [thioredoxin]-disulfide + L-methionine + H2O = L-methionine (S)-S-oxide + [thioredoxin]-dithiol. It carries out the reaction L-methionyl-[protein] + [thioredoxin]-disulfide + H2O = L-methionyl-(R)-S-oxide-[protein] + [thioredoxin]-dithiol. Functionally, has an important function as a repair enzyme for proteins that have been inactivated by oxidation. Catalyzes the reversible oxidation-reduction of methionine sulfoxide in proteins to methionine. This chain is Peptide methionine sulfoxide reductase MsrA/MsrB (msrAB), found in Neisseria gonorrhoeae.